Consider the following 152-residue polypeptide: Actin-related protein 2/3 complex subunit 5-B (152 aa).

Residues 21-44 are disordered; it reads NKFVDDQLQEEPAEPQGPDEAEVD. Acidic residues predominate over residues 27–43; that stretch reads QLQEEPAEPQGPDEAEV.

The protein belongs to the ARPC5 family. Component of the Arp2/3 complex composed of actr2/arp2, actr3/arp3, arpc1 (arpc1a or arpc1b), arpc2, arpc3, arpc4 and arpc5.

It is found in the cytoplasm. The protein resides in the cytoskeleton. It localises to the cell projection. Its subcellular location is the nucleus. Functionally, component of the Arp2/3 complex, a multiprotein complex that mediates actin polymerization upon stimulation by nucleation-promoting factor (NPF). The Arp2/3 complex mediates the formation of branched actin networks in the cytoplasm, providing the force for cell motility. In addition to its role in the cytoplasmic cytoskeleton, the Arp2/3 complex also promotes actin polymerization in the nucleus, thereby regulating gene transcription and repair of damaged DNA. The Arp2/3 complex promotes homologous recombination (HR) repair in response to DNA damage by promoting nuclear actin polymerization, leading to drive motility of double-strand breaks (DSBs). In Xenopus laevis (African clawed frog), this protein is Actin-related protein 2/3 complex subunit 5-B (arpc5-b).